Here is a 607-residue protein sequence, read N- to C-terminus: Autophagy-related protein 16-1 (607 aa).

An interaction with ATG5 region spans residues 13 to 43; that stretch reads WKRHIAEELRRRDRLQRQAFEEIILQYTKLL. The stretch at 79 to 230 forms a coiled coil; the sequence is DSQLQEMAQL…QKELAEAAKE (152 aa). S139 carries the post-translational modification Phosphoserine. The interval 207 to 230 is WIPI2-binding; the sequence is AENEKDSRRRQARLQKELAEAAKE. The interval 230-242 is RB1CC1-binding; that stretch reads EPLPVEQDDDIEV. Phosphoserine is present on residues S269 and S287. The short motif at 296–299 is the Caspase cleavage element; it reads DIMD. 7 WD repeats span residues 320–359, 364–403, 406–445, 447–484, 486–525, 532–573, and 575–607; these read AHDGEVNAVQFSPGSRLLATGGMDRRVKLWEAFGDKCEFK, GSNAGITSIEFDSAGAYLLAASNDFASRIWTVDDYRLRHT, GHSGKVLSAKFLLDNARIVSGSHDRTLKLWDLRSKVCIKT, FAGSSCNDIVCTEQCVMSGHFDKKIRFWDIRSESVVRE, ELLGKITALDLNPERTELLSCSRDDLLKVIDLRTNAVKQT, KCGS…KVLS, and QHSSSINAVAWAPSGLHVVSVDKGSRAVLWAQP.

Belongs to the WD repeat ATG16 family. In terms of assembly, homodimer. Homooligomer. Heterooligomer with ATG16L2. Interacts with WIPI1. Interacts with WIPI2. Interacts with RB1CC1; the interaction is required for ULK1 complex-dependent autophagy. Interacts with ATG5. Part of the minor complex composed of 4 sets of ATG12-ATG5 and ATG16L1 (400 kDa); this complex interacts with ATG3 leading to disruption of ATG7 interaction and promotion of ATG8-like proteins lipidation. Part of the major complex composed of 8 sets of ATG12-ATG5 and ATG16L1 (800 kDa). Interacts with RAB33B (GTP- and GDP-bound forms); the complex consists of a tetramer where two RAB33B molecules bind independently one molecule of the ATG16L1 homodimer; the interaction promotes ATG12-ATG5-ATG16L1 complex recruitment to phagophores. Interacts (via WD repeats) with TMEM59; the interaction mediates unconventional autophagic activity of TMEM59. Interacts with TLR2. Interacts (via WD repeats) with MEFV. Interacts (via N-terminal) with CLTC. Interacts with NOD1. Interacts with NOD2. Interacts with TUFM. Interacts with TRIM16. Interacts (via WD repeats) with SPATA33. Interacts with Irgm1. Proteolytic cleavage by activated CASP3 leads to degradation and may regulate autophagy upon cellular stress and apoptotic stimuli. In terms of processing, phosphorylation at Ser-139 promotes association with the ATG12-ATG5 conjugate to form the ATG12-ATG5-ATG16L1 complex. As to expression, widely expressed. Expressed in the testis and sperm midpiece (at protein level). In terms of tissue distribution, expressed in liver. Highly expressed in liver. As to expression, expressed in brain.

The protein localises to the cytoplasm. It is found in the preautophagosomal structure membrane. It localises to the endosome membrane. The protein resides in the lysosome membrane. In terms of biological role, plays an essential role in both canonical and non-canonical autophagy: interacts with ATG12-ATG5 to mediate the lipidation to ATG8 family proteins (MAP1LC3A, MAP1LC3B, MAP1LC3C, GABARAPL1, GABARAPL2 and GABARAP). Acts as a molecular hub, coordinating autophagy pathways via distinct domains that support either canonical or non-canonical signaling. During canonical autophagy, interacts with ATG12-ATG5 to mediate the conjugation of phosphatidylethanolamine (PE) to ATG8 proteins, to produce a membrane-bound activated form of ATG8. Thereby, controls the elongation of the nascent autophagosomal membrane. As part of the ATG8 conjugation system with ATG5 and ATG12, required for recruitment of LRRK2 to stressed lysosomes and induction of LRRK2 kinase activity in response to lysosomal stress. Also involved in non-canonical autophagy, a parallel pathway involving conjugation of ATG8 proteins to single membranes at endolysosomal compartments, probably by catalyzing conjugation of phosphatidylserine (PS) to ATG8. Non-canonical autophagy plays a key role in epithelial cells to limit lethal infection by influenza A (IAV) virus. Regulates mitochondrial antiviral signaling (MAVS)-dependent type I interferon (IFN-I) production. Negatively regulates NOD1- and NOD2-driven inflammatory cytokine response. Instead, promotes an autophagy-dependent antibacterial pathway together with NOD1 or NOD2. Plays a role in regulating morphology and function of Paneth cell. The sequence is that of Autophagy-related protein 16-1 from Mus musculus (Mouse).